Here is a 146-residue protein sequence, read N- to C-terminus: MPAKGPLQSVQVFGRKKTATAVAHCKRGNGLIKVNGRPLETIEPATLQYKLLEPVLLLGKERFAGVDIRVRVKGGGHVAQVYAIRQSISKALVAYYQKYVDEASKKEIKDILIQYDRTLLVADPRRCESKKFGGPGARARYQKSYR.

This sequence belongs to the universal ribosomal protein uS9 family. In terms of assembly, component of the small ribosomal subunit.

It localises to the cytoplasm. Component of the small ribosomal subunit. The ribosome is a large ribonucleoprotein complex responsible for the synthesis of proteins in the cell. This chain is Small ribosomal subunit protein uS9 (rps16), found in Ictalurus punctatus (Channel catfish).